A 175-amino-acid polypeptide reads, in one-letter code: Adenine phosphoribosyltransferase (175 aa).

The protein belongs to the purine/pyrimidine phosphoribosyltransferase family. In terms of assembly, homodimer.

Its subcellular location is the cytoplasm. The catalysed reaction is AMP + diphosphate = 5-phospho-alpha-D-ribose 1-diphosphate + adenine. It participates in purine metabolism; AMP biosynthesis via salvage pathway; AMP from adenine: step 1/1. In terms of biological role, catalyzes a salvage reaction resulting in the formation of AMP, that is energically less costly than de novo synthesis. The sequence is that of Adenine phosphoribosyltransferase from Francisella tularensis subsp. tularensis (strain WY96-3418).